The primary structure comprises 192 residues: Elongation factor P (192 aa).

This sequence belongs to the elongation factor P family.

The protein localises to the cytoplasm. Its pathway is protein biosynthesis; polypeptide chain elongation. Involved in peptide bond synthesis. Stimulates efficient translation and peptide-bond synthesis on native or reconstituted 70S ribosomes in vitro. Probably functions indirectly by altering the affinity of the ribosome for aminoacyl-tRNA, thus increasing their reactivity as acceptors for peptidyl transferase. The chain is Elongation factor P from Borrelia duttonii (strain Ly).